We begin with the raw amino-acid sequence, 184 residues long: Protein GrpE (184 aa).

Residues 1-14 show a composition bias toward polar residues; sequence MANEQNEQSQDLSS. Residues 1-35 are disordered; that stretch reads MANEQNEQSQDLSSEQTTQDHEQTQTEGVEQGAEI.

It belongs to the GrpE family. In terms of assembly, homodimer.

Its subcellular location is the cytoplasm. In terms of biological role, participates actively in the response to hyperosmotic and heat shock by preventing the aggregation of stress-denatured proteins, in association with DnaK and GrpE. It is the nucleotide exchange factor for DnaK and may function as a thermosensor. Unfolded proteins bind initially to DnaJ; upon interaction with the DnaJ-bound protein, DnaK hydrolyzes its bound ATP, resulting in the formation of a stable complex. GrpE releases ADP from DnaK; ATP binding to DnaK triggers the release of the substrate protein, thus completing the reaction cycle. Several rounds of ATP-dependent interactions between DnaJ, DnaK and GrpE are required for fully efficient folding. This chain is Protein GrpE, found in Acinetobacter baylyi (strain ATCC 33305 / BD413 / ADP1).